A 331-amino-acid polypeptide reads, in one-letter code: UDP-galactose/UDP-glucose transporter 3 (331 aa).

Helical transmembrane passes span 11–31 (VLLLSFCVAGIWAAYIYQGIL), 49–69 (HLAFLNLAQNVICLVWSYIMI), 80–100 (APWWTYWSAGITNTIGPAMGI), 112–132 (VLAKSSKMIPVMLMGSLVYGI), 135–155 (TLPEYLCTFLVAGGVSMFALL), 170–190 (APLGYGLCFLNLAFDGFTNAT), 206–226 (IMLGMNLWGTIYNMVYMFGLP), and 245–265 (WDILMYCLCGAVGQNFIFLTI). A Di-lysine motif motif is present at residues 327 to 331 (KKKKA).

It belongs to the nucleotide-sugar transporter family. UDP-galactose:UMP antiporter (TC 2.A.7.11) subfamily. In terms of tissue distribution, mostly expressed in flowers, and, to a lower extent, in roots, stems and leaves.

The protein resides in the endoplasmic reticulum membrane. It is found in the golgi apparatus membrane. In terms of biological role, essential sugar transporter required for the transport of UDP-glucose from the cytoplasm into the Golgi and the endoplasmic reticulum. Essential for pollen development and involved in embryo sac progress. In Arabidopsis thaliana (Mouse-ear cress), this protein is UDP-galactose/UDP-glucose transporter 3.